The primary structure comprises 721 residues: Fatty acid oxidation complex subunit alpha (721 aa).

Residues 1–190 (MIYEGKAITV…KVGVVDAIVA (190 aa)) form an enoyl-CoA hydratase/isomerase region. Asp297 contacts substrate. The tract at residues 312–721 (RDVKQAAVLG…SFFGQASSEV (410 aa)) is 3-hydroxyacyl-CoA dehydrogenase. Residues Met325, Asp344, 401–403 (VVE), Lys408, and Ser430 contribute to the NAD(+) site. His451 (for 3-hydroxyacyl-CoA dehydrogenase activity) is an active-site residue. Position 454 (Asn454) interacts with NAD(+). Substrate contacts are provided by Asn501 and Tyr660.

In the N-terminal section; belongs to the enoyl-CoA hydratase/isomerase family. This sequence in the C-terminal section; belongs to the 3-hydroxyacyl-CoA dehydrogenase family. Heterotetramer of two alpha chains (FadB) and two beta chains (FadA).

It catalyses the reaction a (3S)-3-hydroxyacyl-CoA + NAD(+) = a 3-oxoacyl-CoA + NADH + H(+). It carries out the reaction a (3S)-3-hydroxyacyl-CoA = a (2E)-enoyl-CoA + H2O. The enzyme catalyses a 4-saturated-(3S)-3-hydroxyacyl-CoA = a (3E)-enoyl-CoA + H2O. The catalysed reaction is (3S)-3-hydroxybutanoyl-CoA = (3R)-3-hydroxybutanoyl-CoA. It catalyses the reaction a (3Z)-enoyl-CoA = a 4-saturated (2E)-enoyl-CoA. It carries out the reaction a (3E)-enoyl-CoA = a 4-saturated (2E)-enoyl-CoA. It functions in the pathway lipid metabolism; fatty acid beta-oxidation. Its function is as follows. Involved in the aerobic and anaerobic degradation of long-chain fatty acids via beta-oxidation cycle. Catalyzes the formation of 3-oxoacyl-CoA from enoyl-CoA via L-3-hydroxyacyl-CoA. It can also use D-3-hydroxyacyl-CoA and cis-3-enoyl-CoA as substrate. The chain is Fatty acid oxidation complex subunit alpha from Pseudomonas syringae pv. tomato (strain ATCC BAA-871 / DC3000).